Consider the following 330-residue polypeptide: RNA polymerase sigma factor RpoS (330 aa).

The sigma-70 factor domain-1 stretch occupies residues 56 to 89; the sequence is DATQLYLGEIGYSPLLTAEEEVYFARRALRGDVA. Residues 94 to 164 form a sigma-70 factor domain-2 region; sequence MIESNLRLVV…ERAIMNQTRT (71 aa). Residues 118–121 carry the Interaction with polymerase core subunit RpoC motif; sequence DLIE. Residues 174–249 form a sigma-70 factor domain-3 region; it reads ELNVYLRTAR…DEKENGPEDT (76 aa). Residues 262–315 form a sigma-70 factor domain-4 region; it reads WLFELNAKQREVLARRFGLLGYEAATLEDVGREIGLTRERVRQIQVEGLRRLRE. The H-T-H motif DNA-binding region spans 288–307; sequence LEDVGREIGLTRERVRQIQV.

The protein belongs to the sigma-70 factor family. RpoS subfamily. Interacts with the RNA polymerase core enzyme.

It is found in the cytoplasm. In terms of biological role, sigma factors are initiation factors that promote the attachment of RNA polymerase to specific initiation sites and are then released. This sigma factor is the master transcriptional regulator of the stationary phase and the general stress response. The sequence is that of RNA polymerase sigma factor RpoS from Shigella flexneri.